A 65-amino-acid chain; its full sequence is uncharacterized protein (65 aa).

The next 2 membrane-spanning stretches (helical) occupy residues 12–31 (IVKW…LIVV) and 41–63 (LVAR…AIIV).

The protein localises to the cell membrane. This is an uncharacterized protein from Halalkalibacterium halodurans (strain ATCC BAA-125 / DSM 18197 / FERM 7344 / JCM 9153 / C-125) (Bacillus halodurans).